The primary structure comprises 932 residues: AP-3 complex subunit delta (932 aa).

Threonine 2 is subject to N-acetylthreonine. HEAT repeat units lie at residues 157 to 194 (SLAR…QYPE), 196 to 231 (LRDN…KNPQ), 233 to 269 (FIQL…VEPK), 270 to 307 (LRAK…LEED), 310 to 346 (ETAM…KINT), 347 to 384 (DFIS…EDNL), 386 to 425 (AIVQ…ENYK), 427 to 466 (KMVN…DISD), 490 to 527 (VTIA…TLVE), 528 to 564 (NGND…NWCN), 570 to 601 (KRFE…ERSV), and 602 to 638 (EVLE…AYEL). Serine 700 and serine 727 each carry phosphoserine. Residues 720 to 868 (EREKERMSNP…EEGNLRKEDE (149 aa)) are disordered. 2 stretches are compositionally biased toward basic and acidic residues: residues 738-747 (ERTKNSKDLL) and 755-766 (SDKKPETIRLNR). Threonine 767 carries the phosphothreonine modification. A compositionally biased stretch (low complexity) spans 767 to 779 (TDNSLNSLSLSTT). Phosphoserine occurs at positions 770 and 773. Positions 783-793 (RKKKKGKKKNR) are enriched in basic residues. The residue at position 798 (serine 798) is a Phosphoserine. Positions 806–832 (APKRKDAFQKPHDNHSTQNPLKKDKIN) are enriched in basic and acidic residues. Positions 838-855 (QLENFDFSNFGQSSNAGR) are enriched in polar residues. Over residues 857 to 868 (SQEEGNLRKEDE) the composition is skewed to basic and acidic residues. Residues 858 to 878 (QEEGNLRKEDELELSRLEANL) adopt a coiled-coil conformation. Serine 888 carries the phosphoserine modification. Over residues 897 to 915 (KKKKKGKKSKSKNKLKTKA) the composition is skewed to basic residues. A disordered region spans residues 897–932 (KKKKKGKKSKSKNKLKTKAKNSPEPNEFLRDQSTDI). Position 918 is a phosphoserine (serine 918). Basic and acidic residues predominate over residues 923-932 (EFLRDQSTDI).

Belongs to the adaptor complexes large subunit family. In terms of assembly, adaptor protein complex 3 (AP-3) is a heterotetramer composed of 2 large adaptins (APL5 and APL6), a medium adaptin (APM3) and a small adaptin (APS3). Interacts with VPS41.

It is found in the golgi apparatus. The protein resides in the cytoplasmic vesicle. Its subcellular location is the clathrin-coated vesicle membrane. Functionally, part of the AP-3 complex, an adaptor-related complex which is not clathrin-associated. The complex is associated with the Golgi region as well as more peripheral structures. It facilitates the budding of vesicles from the Golgi membrane and may be directly involved in trafficking to the vacuole. Required for the transport via the ALP pathway, which directs the transport of the cargo proteins PHO8 and VAM3 to the vacuole. This chain is AP-3 complex subunit delta (APL5), found in Saccharomyces cerevisiae (strain ATCC 204508 / S288c) (Baker's yeast).